Here is a 557-residue protein sequence, read N- to C-terminus: Selenoprotein N (557 aa).

The disordered stretch occupies residues 1 to 24; sequence MGQARPAARRPHSPDPGAQPAPPR. An N-terminal signal peptide occupies residues 1–42; the sequence is MGQARPAARRPHSPDPGAQPAPPRRRARALALLGALLAAAAA. Residues 67–102 form the EF-hand domain; the sequence is VLGTDGLFLFSSLDTDQDMYISPEEFKPIAEKLTGS. The N-linked (GlcNAc...) asparagine glycan is linked to Asn-156. Position 428 (Sec-428) is a non-standard amino acid, selenocysteine. N-linked (GlcNAc...) asparagine glycosylation is found at Asn-449 and Asn-497.

As to quaternary structure, interacts with RYR1, RYR2 and RYR3. N-glycosylated.

Its subcellular location is the endoplasmic reticulum membrane. Its function is as follows. Plays an important role in cell protection against oxidative stress and in the regulation of redox-related calcium homeostasis. Regulates the calcium level of the ER by protecting the calcium pump ATP2A2 against the oxidoreductase ERO1A-mediated oxidative damage. Within the ER, ERO1A activity increases the concentration of H(2)O(2), which attacks the luminal thiols in ATP2A2 and thus leads to cysteinyl sulfenic acid formation (-SOH) and SEPN1 reduces the SOH back to free thiol (-SH), thus restoring ATP2A2 activity. Acts as a modulator of ryanodine receptor (RyR) activity: protects RyR from oxidation due to increased oxidative stress, or directly controls the RyR redox state, regulating the RyR-mediated calcium mobilization required for normal muscle development and differentiation. Essential for muscle regeneration and satellite cell maintenance in skeletal muscle. The protein is Selenoprotein N of Mus musculus (Mouse).